A 499-amino-acid polypeptide reads, in one-letter code: Tektin-like protein 1 (499 aa).

2 coiled-coil regions span residues 197 to 227 (SMLT…LKTL) and 297 to 317 (LNEA…MAKN). The residue at position 372 (Y372) is a Phosphotyrosine.

Microtubule inner protein component of sperm flagellar doublet microtubules.

It localises to the cytoplasm. Its subcellular location is the cytoskeleton. It is found in the flagellum axoneme. Functionally, microtubule inner protein (MIP) part of the dynein-decorated doublet microtubules (DMTs) in sperm flagellar axoneme, which is required for motile flagellum beating. Forms an extensive interaction network cross-linking the lumen of axonemal doublet microtubules. In Homo sapiens (Human), this protein is Tektin-like protein 1.